Here is a 256-residue protein sequence, read N- to C-terminus: Imidazole glycerol phosphate synthase subunit HisF (256 aa).

Residues aspartate 12 and aspartate 131 contribute to the active site.

It belongs to the HisA/HisF family. As to quaternary structure, heterodimer of HisH and HisF.

It localises to the cytoplasm. The catalysed reaction is 5-[(5-phospho-1-deoxy-D-ribulos-1-ylimino)methylamino]-1-(5-phospho-beta-D-ribosyl)imidazole-4-carboxamide + L-glutamine = D-erythro-1-(imidazol-4-yl)glycerol 3-phosphate + 5-amino-1-(5-phospho-beta-D-ribosyl)imidazole-4-carboxamide + L-glutamate + H(+). The protein operates within amino-acid biosynthesis; L-histidine biosynthesis; L-histidine from 5-phospho-alpha-D-ribose 1-diphosphate: step 5/9. Its function is as follows. IGPS catalyzes the conversion of PRFAR and glutamine to IGP, AICAR and glutamate. The HisF subunit catalyzes the cyclization activity that produces IGP and AICAR from PRFAR using the ammonia provided by the HisH subunit. In Pseudomonas fluorescens (strain SBW25), this protein is Imidazole glycerol phosphate synthase subunit HisF.